We begin with the raw amino-acid sequence, 3390 residues long: Genome polyprotein (3390 aa).

Residues 1 to 15 (MNNQRKKTGKPSINM) are interaction with host EXOC1. The Cytoplasmic segment spans residues 1–100 (MNNQRKKTGK…MLSIINQRKK (100 aa)). Residues 37–72 (LLNGQGPMKLVMAFIAFLRFLAIPPTAGVLARWGTF) form a hydrophobic; homodimerization of capsid protein C region. The propeptide at 101–114 (TSLCLMMILPAALA) is ER anchor for the capsid protein C, removed in mature form by serine protease NS3. A helical membrane pass occupies residues 101-120 (TSLCLMMILPAALAFHLTSR). The Extracellular segment spans residues 121 to 243 (DGEPRMIVGK…VEKVETWALR (123 aa)). N183 carries an N-linked (GlcNAc...) asparagine; by host glycan. A helical transmembrane segment spans residues 244–264 (HPGFTILALFLAHYIGTSLTQ). K265 is a topological domain (cytoplasmic). A helical membrane pass occupies residues 266–280 (VVIFILLMLVTPSMT). The Extracellular portion of the chain corresponds to 281-723 (MRCVGVGNRD…VHQIFGSAYT (443 aa)). 4 cysteine pairs are disulfide-bonded: C283–C310, C340–C401, C354–C385, and C372–C396. N347 is a glycosylation site (N-linked (GlcNAc...) asparagine; by host). Residues 378–391 (DRGWGNGCGLFGKG) form a fusion peptide region. Residue N433 is glycosylated (N-linked (GlcNAc...) asparagine; by host). Intrachain disulfides connect C463–C563 and C580–C611. A helical membrane pass occupies residues 724–744 (ALFSGVSWVMKIGIGVLLTWI). Residues 745 to 750 (GLNSKN) lie on the Cytoplasmic side of the membrane. Residues 751 to 771 (TSMSFSCIAIGIITLYLGAVV) traverse the membrane as a helical segment. Residues 772 to 1193 (QADMGCVINW…MIGSNASDRM (422 aa)) are Extracellular-facing. Intrachain disulfides connect C777-C788, C828-C916, C952-C996, C1053-C1102, C1064-C1086, and C1085-C1089. N-linked (GlcNAc...) asparagine; by host glycans are attached at residues N903 and N980. N-linked (GlcNAc...) asparagine; by host glycans are attached at residues N1132 and N1188. The helical transmembrane segment at 1194–1218 (GMGVTYLALIATFKIQPFLALGFFL) threads the bilayer. At 1219–1224 (RKLTSR) the chain is on the cytoplasmic side. The chain crosses the membrane as a helical span at residues 1225-1243 (ENLLLGVGLAMATTLQLPE). At 1244-1267 (DIEQMANGVALGLMALKLITQFET) the chain is on the lumenal side. The helical transmembrane segment at 1268-1288 (YQLWTALVSLTCSNTIFTLTV) threads the bilayer. A topological domain (cytoplasmic) is located at residue A1289. Residues 1290–1308 (WRTATLILAGVSLLPVCQS) form a helical membrane-spanning segment. The Lumenal segment spans residues 1309–1315 (SSMRKTD). Residues 1316-1336 (WLPMTVAAMGVPPLPLFIFSL) form a helical membrane-spanning segment. The Cytoplasmic portion of the chain corresponds to 1337–1344 (KDTLKRRS). Residues 1345-1365 (WPLNEGVMAVGLVSILASSLL) form a helical membrane-spanning segment. The Lumenal segment spans residues 1366–1368 (RND). Residues 1369–1389 (VPMAGPLVAGGLLIACYVITG) form a helical membrane-spanning segment. Residues 1390–1443 (TSADLTVEKAPDVTWEEEAEQTGVSHNLMITVDDDGTMRIKDDETENILTVLLK) lie on the Cytoplasmic side of the membrane. The segment at 1396-1435 (VEKAPDVTWEEEAEQTGVSHNLMITVDDDGTMRIKDDETE) is interacts with and activates NS3 protease. Positions 1444-1464 (TALLIVSGIFPYSIPATLLVW) form an intramembrane region, helical. At 1465–2146 (HTWQKQTQRS…VEELPETMET (682 aa)) the chain is on the cytoplasmic side. The region spanning 1474–1651 (SGVLWDVPSP…NAEPDGPTPE (178 aa)) is the Peptidase S7 domain. Residues H1524, D1548, and S1608 each act as charge relay system; for serine protease NS3 activity in the active site. The 157-residue stretch at 1654–1810 (EEMFKKRNLT…QSNAPIQDEE (157 aa)) folds into the Helicase ATP-binding domain. The tract at residues 1658-1661 (KKRN) is important for RNA-binding. 1667–1674 (LHPGSGKT) is a binding site for ATP. A DEAH box motif is present at residues 1758–1761 (DEAH). Residues 1820–1986 (SGNEWITDFA…GIIPALFEPE (167 aa)) form the Helicase C-terminal domain. K1862 carries the N6-acetyllysine; by host modification. A helical membrane pass occupies residues 2147-2167 (LLLLGLMILLTGGAMLFLISG). Over 2168 to 2169 (KG) the chain is Lumenal. The helical intramembrane region spans 2170–2190 (IGKTSIGLICVIASSGMLWMA). Position 2191 (E2191) is a topological domain, lumenal. Residues 2192 to 2212 (VPLQWIASAIVLEFFMMVLLI) form a helical membrane-spanning segment. Topologically, residues 2213-2227 (PEPEKQRTPQDNQLA) are cytoplasmic. The chain crosses the membrane as a helical span at residues 2228–2248 (YVVIGILTLAATIAANEMGLL). The Lumenal segment spans residues 2249–2273 (ETTKRDLGMSKEPGVVSPTSYLDVD). The segment at residues 2274–2294 (LHPASAWTLYAVATTVITPML) is an intramembrane region (helical). The Lumenal segment spans residues 2295–2305 (RHTIENSTANV). Residues N2300 and N2304 are each glycosylated (N-linked (GlcNAc...) asparagine; by host). The helical intramembrane region spans 2306–2326 (SLAAIANQAVVLMGLDKGWPI). The Lumenal segment spans residues 2327–2346 (SKMDLGVPLLALGCYSQVNP). Residues 2347–2367 (LTLTAAVLLLITHYAIIGPGL) form a helical membrane-spanning segment. Residues 2368–2412 (QAKATREAQKRTAAGIMKNPTVDGIMTIDLDSVIFDSKFEKQLGQ) lie on the Cytoplasmic side of the membrane. The chain crosses the membrane as a helical span at residues 2413–2433 (VMLLVLCAVQLLLMRTSWALC). Over 2434 to 2458 (EALTLATGPITTLWEGSPGKFWNTT) the chain is Lumenal. N-linked (GlcNAc...) asparagine; by host glycosylation occurs at N2456. Residues 2459 to 2479 (IAVSMANIFRGSYLAGAGLAF) traverse the membrane as a helical segment. Residues 2480 to 3390 (SIMKSVGTGK…KEEESEGAIW (911 aa)) are Cytoplasmic-facing. An mRNA cap 0-1 NS5-type MT domain is found at 2492 to 2753 (TGSQGETLGE…DVDLGAGTRH (262 aa)). S-adenosyl-L-methionine is bound at residue S2546. S2546 bears the Phosphoserine mark. The active-site For 2'-O-MTase activity is the K2551. Residues 2567 to 2570 (VIDL) carry the SUMO-interacting motif motif. The S-adenosyl-L-methionine site is built by G2576, W2577, T2594, K2595, D2621, and V2622. D2636 functions as the For 2'-O-MTase activity in the catalytic mechanism. I2637 contacts S-adenosyl-L-methionine. Catalysis depends on for 2'-O-MTase activity residues K2670 and E2706. Y2708 lines the S-adenosyl-L-methionine pocket. Zn(2+)-binding residues include E2927, H2931, C2936, and C2939. The RdRp catalytic domain occupies 3018-3168 (AMYADDTAGW…PIDDRFANAL (151 aa)). Positions 3202, 3218, and 3337 each coordinate Zn(2+).

In the N-terminal section; belongs to the class I-like SAM-binding methyltransferase superfamily. mRNA cap 0-1 NS5-type methyltransferase family. As to quaternary structure, homodimer. Interacts (via N-terminus) with host EXOC1 (via C-terminus); this interaction results in EXOC1 degradation through the proteasome degradation pathway. Forms heterodimers with envelope protein E in the endoplasmic reticulum and Golgi. In terms of assembly, homodimer; in the endoplasmic reticulum and Golgi. Interacts with protein prM. Interacts with non-structural protein 1. As to quaternary structure, homodimer; Homohexamer when secreted. Interacts with envelope protein E. Interacts (via N-terminus) with serine protease NS3. In terms of assembly, forms a heterodimer with serine protease NS3. May form homooligomers. As to quaternary structure, forms a heterodimer with NS2B. Interacts with NS4B. Interacts with unphosphorylated RNA-directed RNA polymerase NS5; this interaction stimulates RNA-directed RNA polymerase NS5 guanylyltransferase activity. Interacts with host SHFL. Interacts with host MAVS; this interaction inhibits the synthesis of IFN-beta. Interacts with host SHFL. Interacts with host AUP1; the interaction occurs in the presence of Dengue virus NS4B and induces lipophagy which facilitates production of virus progeny particles. In terms of assembly, interacts with serine protease NS3. As to quaternary structure, homodimer. Interacts with host STAT2; this interaction inhibits the phosphorylation of the latter, and, when all viral proteins are present (polyprotein), targets STAT2 for degradation. Interacts with serine protease NS3. Post-translationally, specific enzymatic cleavages in vivo yield mature proteins. Cleavages in the lumen of endoplasmic reticulum are performed by host signal peptidase, whereas cleavages in the cytoplasmic side are performed by serine protease NS3. Signal cleavage at the 2K-4B site requires a prior NS3 protease-mediated cleavage at the 4A-2K site. In terms of processing, cleaved in post-Golgi vesicles by a host furin, releasing the mature small envelope protein M, and peptide pr. This cleavage is incomplete as up to 30% of viral particles still carry uncleaved prM. N-glycosylated. Post-translationally, N-glycosylated. The excreted form is glycosylated and this is required for efficient secretion of the protein from infected cells. In terms of processing, acetylated by host KAT5. Acetylation modulates NS3 RNA-binding and unwinding activities and plays an important positive role for viral replication. Sumoylation of RNA-directed RNA polymerase NS5 increases NS5 protein stability allowing proper viral RNA replication. Post-translationally, phosphorylated on serines residues. This phosphorylation may trigger NS5 nuclear localization.

The protein resides in the virion. The protein localises to the host nucleus. Its subcellular location is the host cytoplasm. It is found in the host perinuclear region. It localises to the secreted. The protein resides in the virion membrane. The protein localises to the host endoplasmic reticulum membrane. Its subcellular location is the host mitochondrion. It catalyses the reaction Selective hydrolysis of -Xaa-Xaa-|-Yaa- bonds in which each of the Xaa can be either Arg or Lys and Yaa can be either Ser or Ala.. The catalysed reaction is RNA(n) + a ribonucleoside 5'-triphosphate = RNA(n+1) + diphosphate. The enzyme catalyses a ribonucleoside 5'-triphosphate + H2O = a ribonucleoside 5'-diphosphate + phosphate + H(+). It carries out the reaction ATP + H2O = ADP + phosphate + H(+). It catalyses the reaction a 5'-end (5'-triphosphoguanosine)-ribonucleoside in mRNA + S-adenosyl-L-methionine = a 5'-end (N(7)-methyl 5'-triphosphoguanosine)-ribonucleoside in mRNA + S-adenosyl-L-homocysteine. The catalysed reaction is a 5'-end (N(7)-methyl 5'-triphosphoguanosine)-ribonucleoside in mRNA + S-adenosyl-L-methionine = a 5'-end (N(7)-methyl 5'-triphosphoguanosine)-(2'-O-methyl-ribonucleoside) in mRNA + S-adenosyl-L-homocysteine + H(+). Functionally, plays a role in virus budding by binding to the cell membrane and gathering the viral RNA into a nucleocapsid that forms the core of a mature virus particle. During virus entry, may induce genome penetration into the host cytoplasm after hemifusion induced by the surface proteins. Can migrate to the cell nucleus where it modulates host functions. Overcomes the anti-viral effects of host EXOC1 by sequestering and degrading the latter through the proteasome degradation pathway. In terms of biological role, inhibits RNA silencing by interfering with host Dicer. Prevents premature fusion activity of envelope proteins in trans-Golgi by binding to envelope protein E at pH6.0. After virion release in extracellular space, gets dissociated from E dimers. Its function is as follows. Acts as a chaperone for envelope protein E during intracellular virion assembly by masking and inactivating envelope protein E fusion peptide. prM is the only viral peptide matured by host furin in the trans-Golgi network probably to avoid catastrophic activation of the viral fusion activity in acidic Golgi compartment prior to virion release. prM-E cleavage is inefficient, and many virions are only partially matured. These uncleaved prM would play a role in immune evasion. Functionally, may play a role in virus budding. Exerts cytotoxic effects by activating a mitochondrial apoptotic pathway through M ectodomain. May display a viroporin activity. In terms of biological role, binds to host cell surface receptor and mediates fusion between viral and cellular membranes. Envelope protein is synthesized in the endoplasmic reticulum in the form of heterodimer with protein prM. They play a role in virion budding in the ER, and the newly formed immature particle is covered with 60 spikes composed of heterodimer between precursor prM and envelope protein E. The virion is transported to the Golgi apparatus where the low pH causes dissociation of PrM-E heterodimers and formation of E homodimers. prM-E cleavage is inefficient, and many virions are only partially matured. These uncleaved prM would play a role in immune evasion. Involved in immune evasion, pathogenesis and viral replication. Once cleaved off the polyprotein, is targeted to three destinations: the viral replication cycle, the plasma membrane and the extracellular compartment. Essential for viral replication. Required for formation of the replication complex and recruitment of other non-structural proteins to the ER-derived membrane structures. Excreted as a hexameric lipoparticle that plays a role against host immune response. Antagonizing the complement function. Binds to the host macrophages and dendritic cells. Inhibits signal transduction originating from Toll-like receptor 3 (TLR3). Its function is as follows. Disrupts the host endothelial glycocalyx layer of host pulmonary microvascular endothelial cells, inducing degradation of sialic acid and shedding of heparan sulfate proteoglycans. NS1 induces expression of sialidases, heparanase, and activates cathepsin L, which activates heparanase via enzymatic cleavage. These effects are probably linked to the endothelial hyperpermeability observed in severe dengue disease. Functionally, component of the viral RNA replication complex that functions in virion assembly and antagonizes the host immune response. In terms of biological role, required cofactor for the serine protease function of NS3. May have membrane-destabilizing activity and form viroporins. Displays three enzymatic activities: serine protease, NTPase and RNA helicase. NS3 serine protease, in association with NS2B, performs its autocleavage and cleaves the polyprotein at dibasic sites in the cytoplasm: C-prM, NS2A-NS2B, NS2B-NS3, NS3-NS4A, NS4A-2K and NS4B-NS5. NS3 RNA helicase binds RNA and unwinds dsRNA in the 3' to 5' direction. Its function is as follows. Regulates the ATPase activity of the NS3 helicase activity. NS4A allows NS3 helicase to conserve energy during unwinding. Plays a role in the inhibition of the host innate immune response. Interacts with host MAVS and thereby prevents the interaction between RIGI and MAVS. In turn, IFN-beta production is impaired. Interacts with host AUP1 which mediates induction of lipophagy in host cells and facilitates production of virus progeny particles. Functionally, functions as a signal peptide for NS4B and is required for the interferon antagonism activity of the latter. In terms of biological role, induces the formation of ER-derived membrane vesicles where the viral replication takes place. Inhibits interferon (IFN)-induced host STAT1 phosphorylation and nuclear translocation, thereby preventing the establishment of cellular antiviral state by blocking the IFN-alpha/beta pathway. Replicates the viral (+) and (-) RNA genome, and performs the capping of genomes in the cytoplasm. NS5 methylates viral RNA cap at guanine N-7 and ribose 2'-O positions. Besides its role in RNA genome replication, also prevents the establishment of cellular antiviral state by blocking the interferon-alpha/beta (IFN-alpha/beta) signaling pathway. Inhibits host TYK2 and STAT2 phosphorylation, thereby preventing activation of JAK-STAT signaling pathway. The sequence is that of Genome polyprotein (pol) from Dengue virus type 3 (strain Sri Lanka/1266/2000) (DENV-3).